The sequence spans 333 residues: Glycerol-3-phosphate dehydrogenase [NAD(P)+] (333 aa).

Residues Phe-19, Arg-40, Arg-41, and Lys-113 each contribute to the NADPH site. Residues Lys-113 and Gly-141 each contribute to the sn-glycerol 3-phosphate site. Ala-145 contributes to the NADPH binding site. The sn-glycerol 3-phosphate site is built by Lys-196, Asp-249, Ser-259, Arg-260, and Asn-261. Lys-196 acts as the Proton acceptor in catalysis. Arg-260 serves as a coordination point for NADPH. Residues Val-282 and Glu-283 each coordinate NADPH.

This sequence belongs to the NAD-dependent glycerol-3-phosphate dehydrogenase family.

The protein localises to the cytoplasm. The catalysed reaction is sn-glycerol 3-phosphate + NAD(+) = dihydroxyacetone phosphate + NADH + H(+). The enzyme catalyses sn-glycerol 3-phosphate + NADP(+) = dihydroxyacetone phosphate + NADPH + H(+). It functions in the pathway membrane lipid metabolism; glycerophospholipid metabolism. Its function is as follows. Catalyzes the reduction of the glycolytic intermediate dihydroxyacetone phosphate (DHAP) to sn-glycerol 3-phosphate (G3P), the key precursor for phospholipid synthesis. In Sinorhizobium fredii (strain NBRC 101917 / NGR234), this protein is Glycerol-3-phosphate dehydrogenase [NAD(P)+].